The primary structure comprises 578 residues: ER degradation-enhancing alpha-mannosidase-like protein 2 (578 aa).

The signal sequence occupies residues 1 to 21; sequence MPFRLLIPLGLLCALLPQHHG. N-linked (GlcNAc...) asparagine glycosylation is found at asparagine 90, asparagine 112, asparagine 289, and asparagine 450. The disordered stretch occupies residues 517 to 557; the sequence is KNTVSSGPWEPPARPGTLFSPENHDQARERKPAKQKVPLLS. The span at 538 to 548 shows a compositional bias: basic and acidic residues; sequence ENHDQARERKP.

The protein belongs to the glycosyl hydrolase 47 family. N-glycosylated. In terms of tissue distribution, expressed ubiquitously in all tissues tested with slightly higher levels detected in small intestine and peripheral blood leukocytes and weakest levels in brain and skeletal muscle.

The protein localises to the endoplasmic reticulum lumen. In terms of biological role, involved in the endoplasmic reticulum-associated degradation (ERAD) pathway that targets misfolded glycoproteins for degradation in an N-glycan-dependent manner. May initiate ERAD by promoting the first mannose trimming step of ERAD substrates, from Man9GlcNAc2 to Man8GlcNAc2. Seems to recognize and bind to exposed hydrophobic regions in target proteins. The chain is ER degradation-enhancing alpha-mannosidase-like protein 2 (EDEM2) from Homo sapiens (Human).